The sequence spans 116 residues: Cocaine- and amphetamine-regulated transcript protein (116 aa).

The signal sequence occupies residues 1–27; sequence MESSRVRLLPLLGAALLLMLPLLGTRA. Tyr41 carries the post-translational modification Phosphotyrosine. Phosphoserine is present on Ser48. Intrachain disulfides connect Cys82/Cys100, Cys88/Cys108, and Cys102/Cys115.

This sequence belongs to the CART family. In terms of tissue distribution, hypothalamus. Found in neurons of the ventrolateral part of the arcuate nucleus, in the external zone of the median eminence, and also found in terminals in the periventricular part of the paraventricular nucleus.

Its subcellular location is the secreted. Its function is as follows. Satiety factor closely associated with the actions of leptin and neuropeptide Y; this anorectic peptide inhibits both normal and starvation-induced feeding and completely blocks the feeding response induced by neuropeptide Y and regulated by leptin in the hypothalamus. It promotes neuronal development and survival in vitro. The chain is Cocaine- and amphetamine-regulated transcript protein (CARTPT) from Homo sapiens (Human).